Reading from the N-terminus, the 149-residue chain is Ribonuclease pancreatic (149 aa).

The signal sequence occupies residues 1–25 (MGLENSLILFSLLVLVLGWVQPSLG). The disordered stretch occupies residues 25-62 (GKESSPDKFKRQHMDTEGSSKSSPTYCNQMRSPQEMTK). Basic and acidic residues predominate over residues 28–42 (SSPDKFKRQHMDTEG). Residues K32 and R35 each coordinate substrate. The active-site Proton acceptor is the H37. The span at 43–61 (SSKSSPTYCNQMRSPQEMT) shows a compositional bias: polar residues. 4 cysteine pairs are disulfide-bonded: C51/C109, C65/C120, C83/C135, and C90/C97. Substrate-binding positions include 66–70 (KPVNT) and K91. H144 serves as the catalytic Proton donor.

It belongs to the pancreatic ribonuclease family. Monomer. Interacts with and forms tight 1:1 complexes with RNH1. Dimerization of two such complexes may occur. Interaction with RNH1 inhibits this protein.

Its subcellular location is the secreted. It catalyses the reaction an [RNA] containing cytidine + H2O = an [RNA]-3'-cytidine-3'-phosphate + a 5'-hydroxy-ribonucleotide-3'-[RNA].. The catalysed reaction is an [RNA] containing uridine + H2O = an [RNA]-3'-uridine-3'-phosphate + a 5'-hydroxy-ribonucleotide-3'-[RNA].. Functionally, endonuclease that catalyzes the cleavage of RNA on the 3' side of pyrimidine nucleotides. Acts on single-stranded and double-stranded RNA. The polypeptide is Ribonuclease pancreatic (RNASE1) (Sundamys muelleri (Mueller's giant sunda rat)).